A 133-amino-acid chain; its full sequence is Triatox (133 aa).

Positions 1–22 (MTTLRVLLAVCCAAYCILAEDV) are cleaved as a signal peptide. The 103-residue stretch at 23–125 (TVPANGELKL…RAMCTVYSAE (103 aa)) folds into the CUB domain. Residues Cys70 and Cys86 are joined by a disulfide bond.

The protein belongs to the venom CUB family. Expressed by the venom gland.

The protein resides in the secreted. Its function is as follows. May function as an antimicrobial peptide and may be related to the innate defense of the insect in the salivary glands. The chain is Triatox from Triatoma infestans (Assassin bug).